A 322-amino-acid polypeptide reads, in one-letter code: Lipoyl synthase (322 aa).

Basic and acidic residues predominate over residues 1 to 25 (MSQRITIDHRSAPALRHPEKAHRPD). The interval 1-29 (MSQRITIDHRSAPALRHPEKAHRPDNPIQ) is disordered. The [4Fe-4S] cluster site is built by cysteine 61, cysteine 66, cysteine 72, cysteine 87, cysteine 91, cysteine 94, and serine 300. Residues 73–289 (WSQRHATMMI…AAAARSKGFL (217 aa)) form the Radical SAM core domain.

It belongs to the radical SAM superfamily. Lipoyl synthase family. It depends on [4Fe-4S] cluster as a cofactor.

It is found in the cytoplasm. The catalysed reaction is [[Fe-S] cluster scaffold protein carrying a second [4Fe-4S](2+) cluster] + N(6)-octanoyl-L-lysyl-[protein] + 2 oxidized [2Fe-2S]-[ferredoxin] + 2 S-adenosyl-L-methionine + 4 H(+) = [[Fe-S] cluster scaffold protein] + N(6)-[(R)-dihydrolipoyl]-L-lysyl-[protein] + 4 Fe(3+) + 2 hydrogen sulfide + 2 5'-deoxyadenosine + 2 L-methionine + 2 reduced [2Fe-2S]-[ferredoxin]. The protein operates within protein modification; protein lipoylation via endogenous pathway; protein N(6)-(lipoyl)lysine from octanoyl-[acyl-carrier-protein]: step 2/2. Catalyzes the radical-mediated insertion of two sulfur atoms into the C-6 and C-8 positions of the octanoyl moiety bound to the lipoyl domains of lipoate-dependent enzymes, thereby converting the octanoylated domains into lipoylated derivatives. This is Lipoyl synthase from Gluconobacter oxydans (strain 621H) (Gluconobacter suboxydans).